The primary structure comprises 119 residues: Large ribosomal subunit protein bL20 (119 aa).

The protein belongs to the bacterial ribosomal protein bL20 family.

Its function is as follows. Binds directly to 23S ribosomal RNA and is necessary for the in vitro assembly process of the 50S ribosomal subunit. It is not involved in the protein synthesizing functions of that subunit. This is Large ribosomal subunit protein bL20 from Acinetobacter baylyi (strain ATCC 33305 / BD413 / ADP1).